The chain runs to 180 residues: Inosine/xanthosine triphosphatase (180 aa).

8-13 (TTNPAK) contributes to the substrate binding site. Residues D38 and E68 each coordinate Mg(2+). Substrate is bound at residue 68–69 (EA).

Belongs to the YjjX NTPase family. Homodimer. Requires Mg(2+) as cofactor. The cofactor is Mn(2+).

It carries out the reaction XTP + H2O = XDP + phosphate + H(+). It catalyses the reaction ITP + H2O = IDP + phosphate + H(+). Phosphatase that hydrolyzes non-canonical purine nucleotides such as XTP and ITP to their respective diphosphate derivatives. Probably excludes non-canonical purines from DNA/RNA precursor pool, thus preventing their incorporation into DNA/RNA and avoiding chromosomal lesions. The polypeptide is Inosine/xanthosine triphosphatase (Yersinia pseudotuberculosis serotype IB (strain PB1/+)).